The chain runs to 2288 residues: Protein Ycf2 (2288 aa).

1629–1636 (GSIGTGRS) lines the ATP pocket.

This sequence belongs to the Ycf2 family.

It is found in the plastid. Its subcellular location is the chloroplast stroma. Functionally, probable ATPase of unknown function. Its presence in a non-photosynthetic plant (Epifagus virginiana) and experiments in tobacco indicate that it has an essential function which is probably not related to photosynthesis. In Phaseolus vulgaris (Kidney bean), this protein is Protein Ycf2.